A 399-amino-acid chain; its full sequence is Acetate kinase (399 aa).

Asparagine 7 contacts Mg(2+). Lysine 14 provides a ligand contact to ATP. Arginine 91 contacts substrate. Residue aspartate 148 is the Proton donor/acceptor of the active site. ATP contacts are provided by residues 208–212 (HLGNG), 283–285 (DFR), and 331–335 (GIGEN). Glutamate 384 provides a ligand contact to Mg(2+).

The protein belongs to the acetokinase family. Homodimer. The cofactor is Mg(2+). It depends on Mn(2+) as a cofactor.

Its subcellular location is the cytoplasm. It catalyses the reaction acetate + ATP = acetyl phosphate + ADP. It functions in the pathway metabolic intermediate biosynthesis; acetyl-CoA biosynthesis; acetyl-CoA from acetate: step 1/2. Catalyzes the formation of acetyl phosphate from acetate and ATP. Can also catalyze the reverse reaction. This chain is Acetate kinase, found in Acetivibrio thermocellus (strain ATCC 27405 / DSM 1237 / JCM 9322 / NBRC 103400 / NCIMB 10682 / NRRL B-4536 / VPI 7372) (Clostridium thermocellum).